Consider the following 234-residue polypeptide: Sugar fermentation stimulation protein homolog (234 aa).

It belongs to the SfsA family.

The protein is Sugar fermentation stimulation protein homolog of Shewanella sp. (strain MR-4).